We begin with the raw amino-acid sequence, 67 residues long: Small ribosomal subunit protein bS21 (67 aa).

The protein belongs to the bacterial ribosomal protein bS21 family.

In Paramagnetospirillum magneticum (strain ATCC 700264 / AMB-1) (Magnetospirillum magneticum), this protein is Small ribosomal subunit protein bS21.